We begin with the raw amino-acid sequence, 193 residues long: A-type ATP synthase subunit E (193 aa).

It belongs to the V-ATPase E subunit family. Has multiple subunits with at least A(3), B(3), C, D, E, F, H, I and proteolipid K(x).

The protein localises to the cell membrane. Its function is as follows. Component of the A-type ATP synthase that produces ATP from ADP in the presence of a proton gradient across the membrane. This Haloquadratum walsbyi (strain DSM 16790 / HBSQ001) protein is A-type ATP synthase subunit E.